Reading from the N-terminus, the 117-residue chain is Ribosome-binding factor A (117 aa).

It belongs to the RbfA family. Monomer. Binds 30S ribosomal subunits, but not 50S ribosomal subunits or 70S ribosomes.

Its subcellular location is the cytoplasm. One of several proteins that assist in the late maturation steps of the functional core of the 30S ribosomal subunit. Associates with free 30S ribosomal subunits (but not with 30S subunits that are part of 70S ribosomes or polysomes). Required for efficient processing of 16S rRNA. May interact with the 5'-terminal helix region of 16S rRNA. This Nitrosomonas eutropha (strain DSM 101675 / C91 / Nm57) protein is Ribosome-binding factor A.